Consider the following 665-residue polypeptide: Transketolase (665 aa).

Substrate is bound at residue His-26. Thiamine diphosphate is bound by residues His-66 and 114–116 (GPL). Positions 94-114 (NSKTPGHPETGETPGVETTTG) are disordered. The segment covering 97–114 (TPGHPETGETPGVETTTG) has biased composition (low complexity). Asp-155 contacts Mg(2+). Thiamine diphosphate-binding residues include Gly-156 and Asn-185. Asn-185 and Ile-187 together coordinate Mg(2+). Substrate-binding residues include His-261, Arg-358, and Ser-385. His-261 is a thiamine diphosphate binding site. Residue Glu-411 is the Proton donor of the active site. Phe-437 serves as a coordination point for thiamine diphosphate. Residues His-461, Asp-469, and Arg-520 each coordinate substrate.

The protein belongs to the transketolase family. In terms of assembly, homodimer. It depends on Mg(2+) as a cofactor. Ca(2+) is required as a cofactor. Requires Mn(2+) as cofactor. Co(2+) serves as cofactor. The cofactor is thiamine diphosphate.

The catalysed reaction is D-sedoheptulose 7-phosphate + D-glyceraldehyde 3-phosphate = aldehydo-D-ribose 5-phosphate + D-xylulose 5-phosphate. Functionally, catalyzes the transfer of a two-carbon ketol group from a ketose donor to an aldose acceptor, via a covalent intermediate with the cofactor thiamine pyrophosphate. This Buchnera aphidicola subsp. Acyrthosiphon pisum (strain APS) (Acyrthosiphon pisum symbiotic bacterium) protein is Transketolase (tkt).